Here is a 160-residue protein sequence, read N- to C-terminus: Putative 4-hydroxy-4-methyl-2-oxoglutarate aldolase (160 aa).

Substrate is bound by residues 78–81 (GDVI) and arginine 100. A divalent metal cation is bound at residue aspartate 101.

It belongs to the class II aldolase/RraA-like family. In terms of assembly, homotrimer. A divalent metal cation is required as a cofactor.

The enzyme catalyses 4-hydroxy-4-methyl-2-oxoglutarate = 2 pyruvate. It carries out the reaction oxaloacetate + H(+) = pyruvate + CO2. Its function is as follows. Catalyzes the aldol cleavage of 4-hydroxy-4-methyl-2-oxoglutarate (HMG) into 2 molecules of pyruvate. Also contains a secondary oxaloacetate (OAA) decarboxylase activity due to the common pyruvate enolate transition state formed following C-C bond cleavage in the retro-aldol and decarboxylation reactions. The sequence is that of Putative 4-hydroxy-4-methyl-2-oxoglutarate aldolase from Mycolicibacterium vanbaalenii (strain DSM 7251 / JCM 13017 / BCRC 16820 / KCTC 9966 / NRRL B-24157 / PYR-1) (Mycobacterium vanbaalenii).